A 545-amino-acid polypeptide reads, in one-letter code: MSSASPLARCCDEATPSAGPRAAQPPYHGPVTSMVAHDAAAGVTGEGAGPPVRRAPARTYQVRTYGCQMNVHDSERLAGLLEAAGYRRATDGSEADVVVFNTCAVRENADNRLYGNLSHLAPRKRANPDMQIAVGGCLAQKDRDAVLRRAPWVDVVFGTHNIGSLPTLLERARHNKVAQVEIAEALQQFPSSLPSSRESAYAAWVSISVGCNNSCTFCIVPSLRGREVDRSPADILAEVRSLVNDGVLEVTLLGQNVNAYGVSFADPALPRNRGAFAELLRACGDIDGLERVRFTSPHPAEFTDDVIEAMAQTRNVCPALHMPLQSGSDRILRAMRRSYRAERYLGIIERVRAAIPHAAITTDLIVGFPGETEEDFAATLDVVRRARFAAAFTFQYSKRPGTPAAQLDGQLPKAVVQERYERLIALQEQISLEANRALVGQAVEVLVATGEGRKDTVTARMSGRARDGRLVHFTAGQPRVRPGDVITTKVTEAAPHHLIADAGVLTHRRTRAGDAHTAGQPGRAVGLGMPGVGLPVSAAKPGGCR.

The tract at residues 1–32 is disordered; sequence MSSASPLARCCDEATPSAGPRAAQPPYHGPVT. Positions 58–174 constitute an MTTase N-terminal domain; sequence RTYQVRTYGC…LPTLLERARH (117 aa). Cys67, Cys103, Cys137, Cys211, Cys215, and Cys218 together coordinate [4Fe-4S] cluster. The Radical SAM core domain occupies 197-433; that stretch reads RESAYAAWVS…IALQEQISLE (237 aa). The TRAM domain occupies 436–504; that stretch reads RALVGQAVEV…PHHLIADAGV (69 aa).

This sequence belongs to the methylthiotransferase family. MiaB subfamily. As to quaternary structure, monomer. Requires [4Fe-4S] cluster as cofactor.

Its subcellular location is the cytoplasm. It catalyses the reaction N(6)-dimethylallyladenosine(37) in tRNA + (sulfur carrier)-SH + AH2 + 2 S-adenosyl-L-methionine = 2-methylsulfanyl-N(6)-dimethylallyladenosine(37) in tRNA + (sulfur carrier)-H + 5'-deoxyadenosine + L-methionine + A + S-adenosyl-L-homocysteine + 2 H(+). Catalyzes the methylthiolation of N6-(dimethylallyl)adenosine (i(6)A), leading to the formation of 2-methylthio-N6-(dimethylallyl)adenosine (ms(2)i(6)A) at position 37 in tRNAs that read codons beginning with uridine. This Mycobacterium bovis (strain BCG / Pasteur 1173P2) protein is tRNA-2-methylthio-N(6)-dimethylallyladenosine synthase.